We begin with the raw amino-acid sequence, 111 residues long: BET1-like protein (111 aa).

Topologically, residues 1–86 (MADWTRAQSS…VARSGRDTRK (86 aa)) are cytoplasmic. Phosphoserine is present on residues Ser9 and Ser37. Positions 15 to 77 (EIVDRENKRM…TGSVKRFSTV (63 aa)) constitute a t-SNARE coiled-coil homology domain. A helical; Anchor for type IV membrane protein membrane pass occupies residues 87–107 (LLCGMAVVLIVAFFILSYLFS). Residues 108 to 111 (RTRT) lie on the Vesicular side of the membrane.

In terms of assembly, component of a SNARE complex consisting of STX5, YKT6, GOSR1 and BET1L. Interacts with STX5. As to expression, widely expressed. Highest levels in heart, liver, skeletal muscle and kidney.

It is found in the golgi apparatus membrane. It localises to the golgi apparatus. The protein resides in the trans-Golgi network membrane. In terms of biological role, vesicle SNARE required for targeting and fusion of retrograde transport vesicles with the Golgi complex. Required for the integrity of the Golgi complex. This is BET1-like protein from Rattus norvegicus (Rat).